Consider the following 84-residue polypeptide: Small ribosomal subunit protein uS17 (84 aa).

Belongs to the universal ribosomal protein uS17 family. In terms of assembly, part of the 30S ribosomal subunit.

Functionally, one of the primary rRNA binding proteins, it binds specifically to the 5'-end of 16S ribosomal RNA. In Actinobacillus pleuropneumoniae serotype 5b (strain L20), this protein is Small ribosomal subunit protein uS17.